A 287-amino-acid chain; its full sequence is Bifunctional protein FolD (287 aa).

Residues 166–168 and I232 contribute to the NADP(+) site; that span reads GAS.

Belongs to the tetrahydrofolate dehydrogenase/cyclohydrolase family. As to quaternary structure, homodimer.

It carries out the reaction (6R)-5,10-methylene-5,6,7,8-tetrahydrofolate + NADP(+) = (6R)-5,10-methenyltetrahydrofolate + NADPH. The enzyme catalyses (6R)-5,10-methenyltetrahydrofolate + H2O = (6R)-10-formyltetrahydrofolate + H(+). Its pathway is one-carbon metabolism; tetrahydrofolate interconversion. Catalyzes the oxidation of 5,10-methylenetetrahydrofolate to 5,10-methenyltetrahydrofolate and then the hydrolysis of 5,10-methenyltetrahydrofolate to 10-formyltetrahydrofolate. This chain is Bifunctional protein FolD, found in Aeromonas hydrophila subsp. hydrophila (strain ATCC 7966 / DSM 30187 / BCRC 13018 / CCUG 14551 / JCM 1027 / KCTC 2358 / NCIMB 9240 / NCTC 8049).